An 86-amino-acid polypeptide reads, in one-letter code: Neuropeptide precursor capa-1 (86 aa).

The signal sequence occupies residues 1–19 (MLLWIVATLLIFSLPVSTA).

Expressed in two pairs of neurons in the anterior part of the nervous system (at protein level).

Its function is as follows. Encodes at least three neuropeptides: two of the periviscerokinin family (APHPSSALLVPYPRV-amide and LYMARV-amide) and one pyrokinin (AFFYTPRI-amide). Functionally, putative ligand for neuromedin U receptor homolog nmur-2. The polypeptide is Neuropeptide precursor capa-1 (Caenorhabditis elegans).